Here is a 216-residue protein sequence, read N- to C-terminus: ATP synthase subunit a (216 aa).

Transmembrane regions (helical) follow at residues 1-21 (MEYSHVVYALLAVALAIIFVL), 62-82 (LIAAIGLFVFFGNILGMVPGF), 88-108 (NINTNLALALLVFFYYHFEGF), 119-139 (FMGPIPLMAPFFFVVEVISHI), 149-169 (LFANMKAGALLLLTLVSLVIK), 174-194 (LVVSPVVLIFVIAIKFLAIFI), and 196-216 (TYIFMILSVVYIAGAVAHEEH).

This sequence belongs to the ATPase A chain family. In terms of assembly, F-type ATPases have 2 components, CF(1) - the catalytic core - and CF(0) - the membrane proton channel. CF(1) has five subunits: alpha(3), beta(3), gamma(1), delta(1), epsilon(1). CF(0) has three main subunits: a(1), b(2) and c(9-12). The alpha and beta chains form an alternating ring which encloses part of the gamma chain. CF(1) is attached to CF(0) by a central stalk formed by the gamma and epsilon chains, while a peripheral stalk is formed by the delta and b chains.

It localises to the cell inner membrane. Functionally, key component of the proton channel; it plays a direct role in the translocation of protons across the membrane. This Aquifex aeolicus (strain VF5) protein is ATP synthase subunit a.